An 860-amino-acid chain; its full sequence is MKSSEIRQAFLNYFVQRGHQIVASSSLVPSNDPTLLFTNAGMVQFKDLFLGLETRSYQRAATAQRCVRAGGKHNDLENVGYTARHHTFFEMLGNFSFGDYFKREAIQYAWEFLTEVLHIPAERLWVTVYKEDLEAEDIWLKEMKVSPERFSRCGEKDNFWSMGDTGPCGPCTEIFYDHGPEVAGGPPGSPDEDGDRYIEIWNLVFMQFNRDREGHLHPLPKPSVDTGMGLERLAAVIQGVHSNYEIDSFQYLIKAIAQLGQDIDLNHTSLKVIADHIRSCSFLIVDGVLPSNEGRGYVLRRIIRRAVRHGNKLGLPSPFFSKLVQPLIDVMGDAYPELINSKAHIERILQQEENQFTRTLEQGLRLLQDHIKNLQGQELSGEVAFKLYDTYGFPIDLTADIIREQGLHIDMEAFNQLMQQQREQSQAASQFTTDYHAVSQLDHQSEFHGYEKESMEAKIIGLLQEGNEVKSINKGAKGAVILDHTPFYAESGGQVGDKGLLIGKEFTFQVDDTQKVGQAVVHYGKVIKGELTLDLLIHAQVDNIRRDAIRLNHTATHLLHAALKKIVGQHVQQRGSLVDAERARFDFSHFEALTPQQIQQIEEVVNAQIRANNEVITQVMDIESAKQSGAVALFGEKYSDAVRVLSMGDFSKELCGGTHARRTGDIGLFKIVAEYGIASGIRRIEMVTGRYALAWVNEQLGFMNNLAATLKTTPNSLQEKVSQLLLDNKNQEKMIAKLLSEKAQKSGADILGEIEEIKGINLLIKQLEGMDSQTMRHTMDQLKSRIDSAVIILFTIEQNKMNVIAGVSKNIIGKAPSAAQLVRHLCGKGGGRDDMAQGGGGVPEDLNSKIKEIKEMIEKI.

4 residues coordinate Zn(2+): histidine 553, histidine 557, cysteine 655, and histidine 659.

Belongs to the class-II aminoacyl-tRNA synthetase family. The cofactor is Zn(2+).

It localises to the cytoplasm. The catalysed reaction is tRNA(Ala) + L-alanine + ATP = L-alanyl-tRNA(Ala) + AMP + diphosphate. Catalyzes the attachment of alanine to tRNA(Ala) in a two-step reaction: alanine is first activated by ATP to form Ala-AMP and then transferred to the acceptor end of tRNA(Ala). Also edits incorrectly charged Ser-tRNA(Ala) and Gly-tRNA(Ala) via its editing domain. The protein is Alanine--tRNA ligase of Legionella pneumophila (strain Corby).